Consider the following 206-residue polypeptide: Pyridoxal 5'-phosphate synthase subunit PdxT (206 aa).

Position 59 to 61 (59 to 61) interacts with L-glutamine; that stretch reads GES. Cys91 functions as the Nucleophile in the catalytic mechanism. L-glutamine-binding positions include Arg123 and 151-152; that span reads IR. Catalysis depends on charge relay system residues His187 and Glu189.

Belongs to the glutaminase PdxT/SNO family. In the presence of PdxS, forms a dodecamer of heterodimers. Only shows activity in the heterodimer.

It catalyses the reaction aldehydo-D-ribose 5-phosphate + D-glyceraldehyde 3-phosphate + L-glutamine = pyridoxal 5'-phosphate + L-glutamate + phosphate + 3 H2O + H(+). It carries out the reaction L-glutamine + H2O = L-glutamate + NH4(+). The protein operates within cofactor biosynthesis; pyridoxal 5'-phosphate biosynthesis. Catalyzes the hydrolysis of glutamine to glutamate and ammonia as part of the biosynthesis of pyridoxal 5'-phosphate. The resulting ammonia molecule is channeled to the active site of PdxS. The chain is Pyridoxal 5'-phosphate synthase subunit PdxT from Mycobacterium sp. (strain KMS).